Consider the following 255-residue polypeptide: Ornithine decarboxylase antizyme (255 aa).

This sequence belongs to the ODC antizyme family. As to quaternary structure, interacts with ODC and thereby sterically blocks ODC homodimerization.

Ornithine decarboxylase (ODC) antizyme protein that negatively regulates ODC activity and intracellular polyamine biosynthesis in response to increased intracellular polyamine levels. Binds to ODC monomers, inhibiting the assembly of the functional ODC homodimer, and targets the monomers for ubiquitin-independent proteolytic destruction by the 26S proteasome. The polypeptide is Ornithine decarboxylase antizyme (OAZ1) (Candida glabrata (strain ATCC 2001 / BCRC 20586 / JCM 3761 / NBRC 0622 / NRRL Y-65 / CBS 138) (Yeast)).